A 298-amino-acid polypeptide reads, in one-letter code: Protein pxr1 (298 aa).

Over residues 1 to 11 the composition is skewed to basic residues; it reads MGLAAPRKRTK. Residues 1–23 form a disordered region; that stretch reads MGLAAPRKRTKISHDPNNTNWAR. A G-patch domain is found at 25 to 79; sequence TSGFGHKILSSQGWTPGSFLGARDAAHADMFTAASAGHIRVVVKDDTLGLGARAG. The interval 145–274 is disordered; sequence LPERESVQQS…RPLGRQIVRG (130 aa). A compositionally biased stretch (polar residues) spans 151–164; it reads VQQSRAAVETSDSN. Residues 199-222 show a composition bias toward basic residues; sequence REKKEKKDKKEKKEKKDKKDKKRK. Positions 247 to 256 are enriched in polar residues; the sequence is GLESDSTSVS.

The protein belongs to the PINX1 family.

Its subcellular location is the nucleus. It localises to the nucleolus. In terms of biological role, involved in rRNA-processing at A0, A1 and A2 sites and negatively regulates telomerase. This chain is Protein pxr1 (pxr1), found in Aspergillus terreus (strain NIH 2624 / FGSC A1156).